The primary structure comprises 373 residues: tRNA-specific 2-thiouridylase MnmA (373 aa).

Residues 12–19 and methionine 38 contribute to the ATP site; that span reads GMSGGVDS. Positions 98–100 are interaction with target base in tRNA; that stretch reads NPD. Residue cysteine 103 is the Nucleophile of the active site. The cysteines at positions 103 and 200 are disulfide-linked. Glycine 127 serves as a coordination point for ATP. Residues 150-152 form an interaction with tRNA region; the sequence is KDQ. Cysteine 200 serves as the catalytic Cysteine persulfide intermediate. The tract at residues 312–313 is interaction with tRNA; sequence RY.

It belongs to the MnmA/TRMU family.

It localises to the cytoplasm. The catalysed reaction is S-sulfanyl-L-cysteinyl-[protein] + uridine(34) in tRNA + AH2 + ATP = 2-thiouridine(34) in tRNA + L-cysteinyl-[protein] + A + AMP + diphosphate + H(+). Catalyzes the 2-thiolation of uridine at the wobble position (U34) of tRNA, leading to the formation of s(2)U34. This chain is tRNA-specific 2-thiouridylase MnmA, found in Streptococcus pyogenes serotype M3 (strain SSI-1).